The following is a 510-amino-acid chain: NAD(P)H-quinone oxidoreductase subunit 2, chloroplastic (510 aa).

The next 12 helical transmembrane spans lie at 24 to 44 (LLLF…GLIL), 59 to 79 (WFYF…LFRW), 99 to 119 (IFQF…VEYI), 124 to 144 (MAIT…MFLC), 149 to 169 (LITI…LSGY), 183 to 203 (YLLM…WLYG), 229 to 249 (ISIA…PAPF), 295 to 315 (WHLL…LIAI), 323 to 343 (MLAY…IVGD), 347 to 367 (GYAS…GTFA), 395 to 415 (ALSS…AGFF), and 418 to 438 (LHLF…IGLL).

Belongs to the complex I subunit 2 family. NDH is composed of at least 16 different subunits, 5 of which are encoded in the nucleus.

The protein localises to the plastid. Its subcellular location is the chloroplast thylakoid membrane. It carries out the reaction a plastoquinone + NADH + (n+1) H(+)(in) = a plastoquinol + NAD(+) + n H(+)(out). The catalysed reaction is a plastoquinone + NADPH + (n+1) H(+)(in) = a plastoquinol + NADP(+) + n H(+)(out). Its function is as follows. NDH shuttles electrons from NAD(P)H:plastoquinone, via FMN and iron-sulfur (Fe-S) centers, to quinones in the photosynthetic chain and possibly in a chloroplast respiratory chain. The immediate electron acceptor for the enzyme in this species is believed to be plastoquinone. Couples the redox reaction to proton translocation, and thus conserves the redox energy in a proton gradient. The sequence is that of NAD(P)H-quinone oxidoreductase subunit 2, chloroplastic from Allium textile (Textile onion).